The primary structure comprises 165 residues: MSATAEQNARNPKGKGGFARTVSQRKRKRLFLIGGALAVLAVAVGLMLTAFNQDIRFFRTPADLTEQDMTSGARFRLGGLVEEGSVSRTGSELRFTVTDTIKTVKVVFEGIPPDLFREGQGVVAEGRFGSDGLFRADNVLAKHDENYVPKDLANSLKKKGVWEGK.

At 1–29 the chain is on the cytoplasmic side; sequence MSATAEQNARNPKGKGGFARTVSQRKRKR. Residues 30 to 50 traverse the membrane as a helical; Signal-anchor for type II membrane protein segment; the sequence is LFLIGGALAVLAVAVGLMLTA. At 51 to 165 the chain is on the periplasmic side; sequence FNQDIRFFRT…LKKKGVWEGK (115 aa). Histidine 143 and tyrosine 147 together coordinate heme.

It belongs to the CcmE/CycJ family.

It localises to the cell inner membrane. Its function is as follows. Heme chaperone required for the biogenesis of c-type cytochromes. Transiently binds heme delivered by CcmC and transfers the heme to apo-cytochromes in a process facilitated by CcmF and CcmH. This Brucella canis (strain ATCC 23365 / NCTC 10854 / RM-666) protein is Cytochrome c-type biogenesis protein CcmE.